We begin with the raw amino-acid sequence, 654 residues long: DNA ligase (654 aa).

Residues 32 to 36 (DAVYD) and 81 to 82 (SL) each bind NAD(+). Residue lysine 112 is the N6-AMP-lysine intermediate of the active site. NAD(+)-binding residues include arginine 133, glutamate 167, and lysine 306. 4 residues coordinate Zn(2+): cysteine 400, cysteine 403, cysteine 416, and cysteine 421. Positions 577–654 (ESSSIFSHKT…EEELLKYLKE (78 aa)) constitute a BRCT domain.

It belongs to the NAD-dependent DNA ligase family. LigA subfamily. Requires Mg(2+) as cofactor. It depends on Mn(2+) as a cofactor.

The enzyme catalyses NAD(+) + (deoxyribonucleotide)n-3'-hydroxyl + 5'-phospho-(deoxyribonucleotide)m = (deoxyribonucleotide)n+m + AMP + beta-nicotinamide D-nucleotide.. In terms of biological role, DNA ligase that catalyzes the formation of phosphodiester linkages between 5'-phosphoryl and 3'-hydroxyl groups in double-stranded DNA using NAD as a coenzyme and as the energy source for the reaction. It is essential for DNA replication and repair of damaged DNA. In Helicobacter acinonychis (strain Sheeba), this protein is DNA ligase.